The following is a 282-amino-acid chain: Putative sugar uptake protein lp_2594 (282 aa).

The next 10 helical transmembrane spans lie at isoleucine 2–glycine 21, methionine 31–phenylalanine 48, valine 53–leucine 75, methionine 90–tryptophan 112, isoleucine 119–alanine 136, phenylalanine 146–serine 163, leucine 176–tyrosine 194, threonine 209–alanine 226, asparagine 233–phenylalanine 252, and isoleucine 262–leucine 281.

Belongs to the GRP transporter (TC 2.A.7.5) family.

The protein resides in the cell membrane. The sequence is that of Putative sugar uptake protein lp_2594 from Lactiplantibacillus plantarum (strain ATCC BAA-793 / NCIMB 8826 / WCFS1) (Lactobacillus plantarum).